Here is a 336-residue protein sequence, read N- to C-terminus: Glyceraldehyde-3-phosphate dehydrogenase (336 aa).

Residues 12–13 (RI), Asp34, Arg78, and Thr121 each bind NAD(+). D-glyceraldehyde 3-phosphate contacts are provided by residues 151-153 (SCT), Thr182, Arg199, 212-213 (TG), and Arg235. The Nucleophile role is filled by Cys152. NAD(+) is bound at residue Asn316.

This sequence belongs to the glyceraldehyde-3-phosphate dehydrogenase family. As to quaternary structure, homotetramer.

It localises to the cytoplasm. The enzyme catalyses D-glyceraldehyde 3-phosphate + phosphate + NAD(+) = (2R)-3-phospho-glyceroyl phosphate + NADH + H(+). It participates in carbohydrate degradation; glycolysis; pyruvate from D-glyceraldehyde 3-phosphate: step 1/5. Its function is as follows. Catalyzes the oxidative phosphorylation of glyceraldehyde 3-phosphate (G3P) to 1,3-bisphosphoglycerate (BPG) using the cofactor NAD. The first reaction step involves the formation of a hemiacetal intermediate between G3P and a cysteine residue, and this hemiacetal intermediate is then oxidized to a thioester, with concomitant reduction of NAD to NADH. The reduced NADH is then exchanged with the second NAD, and the thioester is attacked by a nucleophilic inorganic phosphate to produce BPG. The polypeptide is Glyceraldehyde-3-phosphate dehydrogenase (gap) (Streptococcus pyogenes serotype M1).